The sequence spans 1429 residues: uncharacterized protein (1429 aa).

2 disordered regions span residues 1-76 (MEGE…SGIE) and 103-130 (PAGA…AGEK). Positions 14-29 (SHSTSVVSERASSSGV) are enriched in low complexity. Over residues 109–121 (SAQNANLISSKSE) the composition is skewed to polar residues. 2 helical membrane-spanning segments follow: residues 197-217 (LTGQ…LSWI) and 225-245 (FFIL…CMIS). The region spanning 266–471 (DYETMSWFNT…WPNMFDYDLS (206 aa)) is the SMP-LTD domain. 2 consecutive C2 domains span residues 462-584 (WPNM…GDIY) and 738-858 (TPVD…DRSA). Positions 899-932 (NTDNSSKQSSENVQSATDPTTPAKDNSTSNAETS) are disordered. The region spanning 1060–1177 (TYMPVPMTLN…EPNVESQQSI (118 aa)) is the C2 3 domain. Residues 1280–1303 (EKNPSRSDLTTTQEASSSASVPPA) are disordered. Over residues 1294 to 1303 (ASSSASVPPA) the composition is skewed to low complexity.

The protein resides in the membrane. This is an uncharacterized protein from Schizosaccharomyces pombe (strain 972 / ATCC 24843) (Fission yeast).